Consider the following 190-residue polypeptide: LIM domain-containing protein WLIM1 (190 aa).

Ala2 is subject to N-acetylalanine. An LIM zinc-binding 1 domain is found at 8–68; that stretch reads QKCMACDKTV…RPHFDQNFKR (61 aa). The interval 74 to 98 is disordered; the sequence is KSFEGTPKIGKPDRPLEGERPAGTK. Over residues 83–95 the composition is skewed to basic and acidic residues; that stretch reads GKPDRPLEGERPA. The region spanning 108 to 168 is the LIM zinc-binding 2 domain; it reads EKCVGCDKTV…KHHHIQLIKE (61 aa).

As to quaternary structure, interacts with F-actin. As to expression, expressed in roots, leaves, stems, flowers and siliques. Not detected in pollen.

The protein resides in the cytoplasm. The protein localises to the cytoskeleton. In terms of biological role, binds to actin filaments and promotes cross-linking into thick bundles. Has an actin-stabilizing activity. The actin regulatory activities are not regulated by pH and [Ca(2+)]. The protein is LIM domain-containing protein WLIM1 of Arabidopsis thaliana (Mouse-ear cress).